A 620-amino-acid chain; its full sequence is Threonine--tRNA ligase (620 aa).

The editing domain stretch occupies residues 1-141; the sequence is MKMLLIHSDY…LSRKIVAKEE (141 aa). Residues 197–496 form a catalytic region; it reads PHVKFIKEKD…AEKGNAPMLP (300 aa). Residues C289, H341, and H465 each coordinate Zn(2+).

The protein belongs to the class-II aminoacyl-tRNA synthetase family. As to quaternary structure, homodimer. Requires Zn(2+) as cofactor.

Its subcellular location is the cytoplasm. The enzyme catalyses tRNA(Thr) + L-threonine + ATP = L-threonyl-tRNA(Thr) + AMP + diphosphate + H(+). Its activity is regulated as follows. Not inhibited by 1 uM borrelidin (BN); probably does not bind BN. Catalyzes the attachment of threonine to tRNA(Thr) in a two-step reaction: L-threonine is first activated by ATP to form Thr-AMP and then transferred to the acceptor end of tRNA(Thr). Also activates L-serine, but does not detectably transfer it to tRNA(Thr). Edits incorrectly charged L-seryl-tRNA(Thr) via its editing domain. Has no activity on correctly acylated L-seryl-tRNA(Ser) or L-threonyl-tRNA(Thr). Deacylates correctly charged glycyl-tRNA(Gly), but not glycyl-tRNA(Gly)(2'-dA76) (the terminal 2'-OH of tRNA adenine 76 has been dehydroxylated) nor the 2'-fluoro tRNA derivative, strongly suggesting the editing function is tRNA catalyzed. The polypeptide is Threonine--tRNA ligase (Methanocaldococcus jannaschii (strain ATCC 43067 / DSM 2661 / JAL-1 / JCM 10045 / NBRC 100440) (Methanococcus jannaschii)).